The sequence spans 430 residues: D-galactonate transporter (430 aa).

Residues 1 to 17 (MDIPVNAAKPGRRRYLT) lie on the Cytoplasmic side of the membrane. A helical membrane pass occupies residues 18–39 (LVMIFITVVICYVDRANLAVAS). The D-galactonate site is built by tyrosine 29 and arginine 32. Residues 40 to 50 (AHIQEEFGITK) lie on the Periplasmic side of the membrane. Residues 51–74 (AEMGYVFSAFAWLYTLCQIPGGWF) traverse the membrane as a helical segment. Tyrosine 64 is a D-galactonate binding site. The Cytoplasmic segment spans residues 75 to 81 (LDRVGSR). A helical transmembrane segment spans residues 82–100 (VTYFIAIFGWSVATLFQGF). The Periplasmic portion of the chain corresponds to 101 to 103 (ATG). Residues 104-125 (LMSLIGLRAITGIFEAPAFPTN) form a helical membrane-spanning segment. Residues 126-141 (NRMVTSWFPEHERASA) are Cytoplasmic-facing. Residues 142-164 (VGFYTSGQFVGLAFLTPLLIWIQ) traverse the membrane as a helical segment. Residues 165–168 (EMLS) are Periplasmic-facing. The chain crosses the membrane as a helical span at residues 169–190 (WHWVFIVTGGIGIIWSLIWFKV). Residues 191-241 (YQPPRLTKGISKAELDYIRDGGGLVDGDAPVKKEARQPLTAKDWKLVFHRK) lie on the Cytoplasmic side of the membrane. The helical transmembrane segment at 242 to 267 (LIGVYLGQFAVASTLWFFLTWFPNYL) threads the bilayer. At 268-276 (TQEKGITAL) the chain is on the periplasmic side. A helical membrane pass occupies residues 277-297 (KAGFMTTVPFLAAFVGVLLSG). Over 298 to 314 (WVADLLVRKGFSLGFAR) the chain is Cytoplasmic. Residues 315-333 (KTPIICGLLISTCIMGANY) traverse the membrane as a helical segment. At 334-336 (TND) the chain is on the periplasmic side. Residues 337–354 (PMMIMCLMALAFFGNGFA) form a helical membrane-spanning segment. Topologically, residues 355–373 (SITWSLVSSLAPMRLIGLT) are cytoplasmic. Position 358 (tryptophan 358) interacts with D-galactonate. Residues 374–395 (GGVFNFAGGLGGITVPLVVGYL) form a helical membrane-spanning segment. Over 396–400 (AQGYG) the chain is Periplasmic. A helical transmembrane segment spans residues 401–423 (FAPALVYISAVALIGALSYILLV). The Cytoplasmic portion of the chain corresponds to 424-430 (GDVKRVG).

It belongs to the major facilitator superfamily. Phthalate permease family.

It localises to the cell inner membrane. The enzyme catalyses D-galactonate(in) + H(+)(in) = D-galactonate(out) + H(+)(out). In terms of biological role, involved in D-galactonate metabolism. Catalyzes the proton-dependent uptake of galactonate into the cell. This Escherichia coli O6:H1 (strain CFT073 / ATCC 700928 / UPEC) protein is D-galactonate transporter (dgoT).